The chain runs to 444 residues: MGQAGCKGLCLSLFDYKTEKYVIAKNKKVGLLYRLLQASILAYLVVWVFLIKKGYQDVDTSLQSAVITKVKGVAFTNTSDLGQRIWDVADYVIPAQGENVFFVVTNLIVTPNQRQNVCAENEGIPDGACSKDSDCHAGEAVTAGNGVKTGRCLRRENLARGTCEIFAWCPLETSSRPEEPFLKEAEDFTIFIKNHIRFPKFNFSKSNVMDVKDRSFLKSCHFGPKNHYCPIFRLGSVIRWAGSDFQDIALEGGVIGINIEWNCDLDKAASECHPHYSFSRLDNKLSKSVSSGYNFRFARYYRDAAGVEFRTLMKAYGIRFDVMVNGKAGKFSIIPTIINVGSGVALMGAGAFFCDLVLIYLIKKREFYRDKKYEEVRGLEDSSQEAEDEASGLGLSEQLTSGPGLLGMPEQQELQEPPEAKRGSSSQKGNGSVCPQLLEPHRST.

At 1-30 the chain is on the cytoplasmic side; the sequence is MGQAGCKGLCLSLFDYKTEKYVIAKNKKVG. The chain crosses the membrane as a helical span at residues 31-51; it reads LLYRLLQASILAYLVVWVFLI. The Extracellular segment spans residues 52–319; it reads KKGYQDVDTS…RTLMKAYGIR (268 aa). Asparagine 77 carries N-linked (GlcNAc...) asparagine glycosylation. Cystine bridges form between cysteine 118–cysteine 169, cysteine 129–cysteine 152, and cysteine 135–cysteine 163. Residue asparagine 202 is glycosylated (N-linked (GlcNAc...) asparagine). 2 disulfides stabilise this stretch: cysteine 220-cysteine 229 and cysteine 263-cysteine 272. Residues 320–362 traverse the membrane as a helical segment; it reads FDVMVNGKAGKFSIIPTIINVGSGVALMGAGAFFCDLVLIYLI. At 363–444 the chain is on the cytoplasmic side; it reads KKREFYRDKK…PQLLEPHRST (82 aa). Residues 378–444 form a disordered region; it reads GLEDSSQEAE…PQLLEPHRST (67 aa).

The protein belongs to the P2X receptor family. Functional P2XRs are organized as homomeric and heteromeric trimers. Homotrimer. Forms heterotrimer with P2RX1. As to expression, expressed at high levels in brain and immune system.

The protein localises to the cell membrane. It carries out the reaction Na(+)(in) = Na(+)(out). It catalyses the reaction Ca(2+)(in) = Ca(2+)(out). The catalysed reaction is chloride(in) = chloride(out). Its activity is regulated as follows. Activated by ATP. Slowly desensitizing. Sensitive to the ATP agonist alpha/beta-methylene-ATP. In terms of biological role, ATP-gated nonselective transmembrane cation channel permeable to potassium, sodium and calcium. Unlike other P2RX receptors, the P2X5 receptor is also permeable to chloride. May play a supporting role in the inflammatory response. Non-functional. This is P2X purinoceptor 5 from Homo sapiens (Human).